Here is a 101-residue protein sequence, read N- to C-terminus: Small ribosomal subunit protein uS14 (101 aa).

It belongs to the universal ribosomal protein uS14 family. As to quaternary structure, part of the 30S ribosomal subunit. Contacts proteins S3 and S10.

Binds 16S rRNA, required for the assembly of 30S particles and may also be responsible for determining the conformation of the 16S rRNA at the A site. The protein is Small ribosomal subunit protein uS14 of Shewanella baltica (strain OS155 / ATCC BAA-1091).